A 1073-amino-acid polypeptide reads, in one-letter code: Pharyngeal muscle protein 2 (1073 aa).

The 35-residue stretch at 9-43 (INDLRVSELKTELEKRGLSTQGVKVVLTVRLNKAL) folds into the SAP domain. Disordered stretches follow at residues 59–186 (VSPM…PEVV), 207–305 (ELKE…SMET), and 337–388 (LLED…KSML). Positions 91–111 (EGNDENVLVEEKEEEEEEEDS) are enriched in acidic residues. Residues 112–127 (HDLQIIEDHELEVPSD) are compositionally biased toward basic and acidic residues. Acidic residues predominate over residues 128 to 151 (EKDDTLVEDEEFEEAEQVEPEPEA). Composition is skewed to basic and acidic residues over residues 156-182 (VEEK…KPVE) and 207-217 (ELKEKPEKEPE). 2 stretches are compositionally biased toward acidic residues: residues 223–232 (EPVEQLENEP) and 248–265 (QDGE…DIEI). The segment covering 277–293 (AEEKVEKKEKKPEEIPH) has biased composition (basic and acidic residues). Residues 366-386 (ASTPQATPSKAASSSAGSGKS) are compositionally biased toward low complexity. One can recognise an RRM domain in the interval 396 to 478 (TSIWIRGMTP…RVLRVEKVSE (83 aa)). 3 disordered regions span residues 481–759 (LTSS…ERRR), 845–917 (QEHR…RNLV), and 1015–1073 (SQNA…RGNY). Low complexity-rich tracts occupy residues 496 to 505 (EAASTMSTSP) and 513 to 524 (PVVTTTTTTSAA). The segment covering 573–587 (ITFDREEESNRDSRR) has biased composition (basic and acidic residues). Residues 588–622 (TIAAAPPARTSRMARSPLRAPLRAARGSESSRSST) show a composition bias toward low complexity. Positions 674–689 (VTVQQDAPRASYQTEQ) are enriched in polar residues. Composition is skewed to basic and acidic residues over residues 707–727 (VSPD…RRAP) and 742–759 (PPRR…ERRR). Low complexity-rich tracts occupy residues 901–917 (SSSN…RNLV), 1015–1026 (SQNAATPSTSTS), and 1034–1060 (QWQQ…SSSN).

Expressed in most tissues including the hypodermal, muscle, neuronal, vulval and intestinal tissues. Isoform a: Expressed in the pharynx, nerve ring, intestine, neurons and ventral nerve cord.

It is found in the nucleus. In terms of biological role, involved in pharyngeal muscle development and ensures pharyngeal grinder function during feeding. Plays a role in the defense against the accumulation of ingested live pathogenic bacteria in the intestine. Has a role in the determination of life span. This is Pharyngeal muscle protein 2 from Caenorhabditis elegans.